The sequence spans 152 residues: Aspartate carbamoyltransferase regulatory chain (152 aa).

Zn(2+) is bound by residues Cys-108, Cys-113, Cys-137, and Cys-140.

It belongs to the PyrI family. In terms of assembly, contains catalytic and regulatory chains. It depends on Zn(2+) as a cofactor.

Its function is as follows. Involved in allosteric regulation of aspartate carbamoyltransferase. In Neisseria meningitidis serogroup A / serotype 4A (strain DSM 15465 / Z2491), this protein is Aspartate carbamoyltransferase regulatory chain.